Here is a 206-residue protein sequence, read N- to C-terminus: FMN-dependent NADH:quinone oxidoreductase (206 aa).

Residues S10 and 15–17 (SVS) contribute to the FMN site.

The protein belongs to the azoreductase type 1 family. In terms of assembly, homodimer. Requires FMN as cofactor.

It carries out the reaction 2 a quinone + NADH + H(+) = 2 a 1,4-benzosemiquinone + NAD(+). The enzyme catalyses N,N-dimethyl-1,4-phenylenediamine + anthranilate + 2 NAD(+) = 2-(4-dimethylaminophenyl)diazenylbenzoate + 2 NADH + 2 H(+). Functionally, quinone reductase that provides resistance to thiol-specific stress caused by electrophilic quinones. In terms of biological role, also exhibits azoreductase activity. Catalyzes the reductive cleavage of the azo bond in aromatic azo compounds to the corresponding amines. The sequence is that of FMN-dependent NADH:quinone oxidoreductase from Acidobacterium capsulatum (strain ATCC 51196 / DSM 11244 / BCRC 80197 / JCM 7670 / NBRC 15755 / NCIMB 13165 / 161).